Here is a 696-residue protein sequence, read N- to C-terminus: DEAD-box ATP-dependent RNA helicase 7 (696 aa).

The interval 1-116 (MPSLPVAAAE…GDEDPADPNA (116 aa)) is disordered. Residues 16–97 (ESASKKSKRK…KVVVEEEEED (82 aa)) adopt a coiled-coil conformation. Residues 27–38 (KAAEVEVEASSR) are compositionally biased toward basic and acidic residues. A compositionally biased stretch (basic residues) spans 39–49 (KKEKKEKKRKA). Over residues 67–77 (STSSDEPAPAA) the composition is skewed to low complexity. Over residues 92-112 (EEEEEDDDEGELTASGDEDPA) the composition is skewed to acidic residues. A Q motif motif is present at residues 115–143 (NALANFRISESLREKLKSKGIKALFPIQA). The Helicase ATP-binding domain occupies 146 to 328 (FDLVLDGHDL…LRFLKSGKKT (183 aa)). 159–166 (ARTGQGKT) serves as a coordination point for ATP. A DEAD box motif is present at residues 274–277 (DEAD). The Helicase C-terminal domain maps to 357–500 (QVIPDIIRCY…ISAPQPTDVA (144 aa)). Residues 641 to 696 (LPPLQEREQSGGSRGGGRFGNRRFSGGGGGRGGGGRGFGGGRGRGGGGGNRFNKRY) form a disordered region. The span at 652–690 (GSRGGGRFGNRRFSGGGGGRGGGGRGFGGGRGRGGGGGN) shows a compositional bias: gly residues.

The protein belongs to the DEAD box helicase family. DDX21/DDX50 subfamily.

It localises to the nucleus. It carries out the reaction ATP + H2O = ADP + phosphate + H(+). The sequence is that of DEAD-box ATP-dependent RNA helicase 7 from Oryza sativa subsp. japonica (Rice).